Reading from the N-terminus, the 587-residue chain is MKRSMYAGRVREEHIGQEITLKGWVGRRRDLGGLIFIDLRDREGIMQLVINPEKVSAEVMATAESLRSEFVIEVTGQVAAREQANDKLPTGAVELNVTALIVLNTAKTTPFEIKDGIEANDDTRLRYRYLDLRRPEMLENLKLRAKVTHSIRNYLDELEFIDVETPFLSKSTPEGARDYLVPSRVNKGHFYALPQSPQITKQLLMNAGFDRYYQIVKCFRDEDLRGDRQPEFTQVDLETSFLTEQEIQDITEGLIARVMKETKDIEVTLPFPRMKYDDAMALYGSDKPDTRFDMLLQDLTEVVKGVDFKVFSEALAVKAIVVKGAADNYSRKDIDKMTEVAKQYGAKGLAWVKVVDGELNGPVAKFLTGIQEELTTALALEDKDLVLFVADTLEVANATLGALRGRIAKELGLIDNDKFNFLWVVDWPMFEWSEEEGRYMSAHHPFTLPQEETAHELEGDLAKVRAIAYDIVLNGYELGGGSLRINQKDLQERMFKALGFSAEEANDQFGFLLEAMDYGFPPHGGLAIGLDRFVMLLAGEENIREVIAFPKNNKATDPMTQAPSTVALKQLEELSLQVEEDETSKTN.

L-aspartate is bound at residue glutamate 174. Residues glutamine 198–lysine 201 form an aspartate region. Arginine 220 serves as a coordination point for L-aspartate. Residues arginine 220–glutamate 222 and glutamine 229 each bind ATP. L-aspartate is bound at residue histidine 443. Residue glutamate 477 coordinates ATP. Position 484 (arginine 484) interacts with L-aspartate. An ATP-binding site is contributed by glycine 529–arginine 532.

It belongs to the class-II aminoacyl-tRNA synthetase family. Type 1 subfamily. In terms of assembly, homodimer.

Its subcellular location is the cytoplasm. The enzyme catalyses tRNA(Asp) + L-aspartate + ATP = L-aspartyl-tRNA(Asp) + AMP + diphosphate. Catalyzes the attachment of L-aspartate to tRNA(Asp) in a two-step reaction: L-aspartate is first activated by ATP to form Asp-AMP and then transferred to the acceptor end of tRNA(Asp). The sequence is that of Aspartate--tRNA ligase from Streptococcus pneumoniae serotype 2 (strain D39 / NCTC 7466).